The primary structure comprises 401 residues: tRNA-specific 2-thiouridylase MnmA (401 aa).

ATP contacts are provided by residues 13-20 (GLSGGVDS) and Met-39. Residues 99–101 (NPD) are interaction with target base in tRNA. Cys-104 functions as the Nucleophile in the catalytic mechanism. A disulfide bridge connects residues Cys-104 and Cys-202. ATP is bound at residue Gly-128. Positions 152–154 (KDQ) are interaction with tRNA. The active-site Cysteine persulfide intermediate is Cys-202. The tract at residues 329-330 (RY) is interaction with tRNA.

Belongs to the MnmA/TRMU family.

The protein resides in the cytoplasm. It catalyses the reaction S-sulfanyl-L-cysteinyl-[protein] + uridine(34) in tRNA + AH2 + ATP = 2-thiouridine(34) in tRNA + L-cysteinyl-[protein] + A + AMP + diphosphate + H(+). Its function is as follows. Catalyzes the 2-thiolation of uridine at the wobble position (U34) of tRNA, leading to the formation of s(2)U34. This Polaromonas sp. (strain JS666 / ATCC BAA-500) protein is tRNA-specific 2-thiouridylase MnmA.